A 110-amino-acid polypeptide reads, in one-letter code: Nucleoid-associated protein PsycPRwf_1729 (110 aa).

This sequence belongs to the YbaB/EbfC family. As to quaternary structure, homodimer.

It localises to the cytoplasm. The protein localises to the nucleoid. Binds to DNA and alters its conformation. May be involved in regulation of gene expression, nucleoid organization and DNA protection. The protein is Nucleoid-associated protein PsycPRwf_1729 of Psychrobacter sp. (strain PRwf-1).